Consider the following 352-residue polypeptide: tRNA N6-adenosine threonylcarbamoyltransferase (352 aa).

Residues histidine 115 and histidine 119 each contribute to the Fe cation site. Substrate contacts are provided by residues 137-141 (LVSGG), aspartate 170, glycine 183, and asparagine 281. Aspartate 309 is a binding site for Fe cation.

The protein belongs to the KAE1 / TsaD family. Fe(2+) is required as a cofactor.

It is found in the cytoplasm. It catalyses the reaction L-threonylcarbamoyladenylate + adenosine(37) in tRNA = N(6)-L-threonylcarbamoyladenosine(37) in tRNA + AMP + H(+). In terms of biological role, required for the formation of a threonylcarbamoyl group on adenosine at position 37 (t(6)A37) in tRNAs that read codons beginning with adenine. Is involved in the transfer of the threonylcarbamoyl moiety of threonylcarbamoyl-AMP (TC-AMP) to the N6 group of A37, together with TsaE and TsaB. TsaD likely plays a direct catalytic role in this reaction. In Methylocapsa acidiphila, this protein is tRNA N6-adenosine threonylcarbamoyltransferase.